We begin with the raw amino-acid sequence, 334 residues long: N-acetyl-gamma-glutamyl-phosphate reductase (334 aa).

Cys154 is an active-site residue.

It belongs to the NAGSA dehydrogenase family. Type 1 subfamily.

The protein localises to the cytoplasm. It carries out the reaction N-acetyl-L-glutamate 5-semialdehyde + phosphate + NADP(+) = N-acetyl-L-glutamyl 5-phosphate + NADPH + H(+). It functions in the pathway amino-acid biosynthesis; L-arginine biosynthesis; N(2)-acetyl-L-ornithine from L-glutamate: step 3/4. Catalyzes the NADPH-dependent reduction of N-acetyl-5-glutamyl phosphate to yield N-acetyl-L-glutamate 5-semialdehyde. The chain is N-acetyl-gamma-glutamyl-phosphate reductase from Vibrio vulnificus (strain YJ016).